Reading from the N-terminus, the 107-residue chain is Glutaredoxin-1 (107 aa).

At A2 the chain carries N-acetylalanine. The 104-residue stretch at 3 to 106 (QEFVNCKIQS…ARLKQIGALQ (104 aa)) folds into the Glutaredoxin domain. Residue K9 is modified to N6-succinyllysine. Intrachain disulfides connect C23–C26 and C79–C83.

It belongs to the glutaredoxin family.

The protein localises to the cytoplasm. Its function is as follows. Has a glutathione-disulfide oxidoreductase activity in the presence of NADPH and glutathione reductase. Reduces low molecular weight disulfides and proteins. This is Glutaredoxin-1 (Glrx) from Rattus norvegicus (Rat).